The sequence spans 449 residues: C4-dicarboxylate transport protein (449 aa).

8 helical membrane-spanning segments follow: residues 20–42 (YLQLYFWVIIAIILGALLGHCYP), 62–84 (IISPVIFLTIVTGIASVAHVGTV), 91–113 (AMVYFLFFSTLALLLGLVVAHVV), 164–181 (ILQVLFVAVLFGIALALA), 202–224 (LVQMLMKMAPIGAFGAIAFTIGK), 239–261 (SFYLTSLLFVLVILGAVSWFSGF), 344–366 (LALFLVAMLSSKGAAGVSGAGFI), and 370–389 (ATLTVVPEVPIAGMALILGV).

The protein belongs to the dicarboxylate/amino acid:cation symporter (DAACS) (TC 2.A.23) family.

The protein resides in the cell inner membrane. Responsible for the transport of dicarboxylates such as succinate, fumarate, and malate from the periplasm across the inner membrane. This Xylella fastidiosa (strain 9a5c) protein is C4-dicarboxylate transport protein (dctA).